The sequence spans 61 residues: Large ribosomal subunit protein uL30 (61 aa).

Belongs to the universal ribosomal protein uL30 family. As to quaternary structure, part of the 50S ribosomal subunit.

The chain is Large ribosomal subunit protein uL30 from Chromohalobacter salexigens (strain ATCC BAA-138 / DSM 3043 / CIP 106854 / NCIMB 13768 / 1H11).